The chain runs to 1040 residues: Multidrug resistance protein MdtB (1040 aa).

Transmembrane regions (helical) follow at residues 15 to 37 (LFILRPVATTLLMAAILLAGIIG), 345 to 362 (FELMLAIALVVMIIYLFL), 367 to 389 (ATIIPGVAVPLSLIGTFAVMVFL), 396 to 418 (LTLMALTIATGFVVDDAIVVIEN), 438 to 460 (GEIGFTIISLTFSLIAVLIPLLF), 472 to 494 (FAVTLAVAILISAVVSLTLTPMM), 535 to 557 (HPWLTLSVAFATLLLSVMLWITI), 867 to 889 (VWLIVAAVVAMYIVLGVLYESFI), 909 to 931 (LIIAGSELDIIAIIGIILLIGIV), 968 to 990 (ILMTTLAALLGALPLMLSTGVGA), and 1000 to 1022 (MVGGLLVSQVLTLFTTPVIYLLF).

The protein belongs to the resistance-nodulation-cell division (RND) (TC 2.A.6) family. MdtB subfamily. In terms of assembly, part of a tripartite efflux system composed of MdtA, MdtB and MdtC. MdtB forms a heteromultimer with MdtC.

Its subcellular location is the cell inner membrane. The sequence is that of Multidrug resistance protein MdtB from Salmonella typhi.